A 187-amino-acid chain; its full sequence is Large ribosomal subunit protein uL5 (187 aa).

The protein belongs to the universal ribosomal protein uL5 family. Part of the 50S ribosomal subunit; part of the 5S rRNA/L5/L18/L25 subcomplex. Contacts the 5S rRNA and the P site tRNA. Forms a bridge to the 30S subunit in the 70S ribosome.

Functionally, this is one of the proteins that bind and probably mediate the attachment of the 5S RNA into the large ribosomal subunit, where it forms part of the central protuberance. In the 70S ribosome it contacts protein S13 of the 30S subunit (bridge B1b), connecting the 2 subunits; this bridge is implicated in subunit movement. Contacts the P site tRNA; the 5S rRNA and some of its associated proteins might help stabilize positioning of ribosome-bound tRNAs. The chain is Large ribosomal subunit protein uL5 from Mycolicibacterium paratuberculosis (strain ATCC BAA-968 / K-10) (Mycobacterium paratuberculosis).